Consider the following 382-residue polypeptide: MSINVFWFLPTHGDGHYLGSSEGARAVDYSYLQQIAQAADRLGFGGVLIPTGRSCEDSWLVAASLIPVTQRLKFLVALRPGIISPTLAARQAATLDRLSNGRALFNLVTGGDPEELAAEGLHLNHTERYEASAEFTHVWRKVLEGETVDFAGKHIQVKGAKLLFPPVQHPRPPLYFGGSSAAAQDLAAEQVELYLTWGETPEQVKEKIEEVRAKAAAKGRTVRFGIRLHVIVRETTEEAWRAANRLIANLDDKTIADAQQAFARFDSVGQQRMAALHGGKKDNLEISPNLWAGVGLVRGGAGTALVGDGPTVAQRIQEYADLGIDTFVFSGYPHLEEAYRVSELLFPHLDLATTELPTQRPATQPQGEVVANIYVPQKVSQS.

This sequence belongs to the SsuD family. In terms of assembly, homotetramer.

It carries out the reaction an alkanesulfonate + FMNH2 + O2 = an aldehyde + FMN + sulfite + H2O + 2 H(+). Its function is as follows. Catalyzes the desulfonation of aliphatic sulfonates. This chain is Alkanesulfonate monooxygenase, found in Yersinia pseudotuberculosis serotype IB (strain PB1/+).